The following is an 831-amino-acid chain: SID1 transmembrane family member 1 (831 aa).

An N-terminal signal peptide occupies residues 1 to 19 (MLDCPRLALLCALPWLLRA). Over 20–308 (AVPGHRAEPL…SVKGSVYVKS (289 aa)) the chain is Extracellular. N-linked (GlcNAc...) asparagine glycosylation is found at N67, N83, N136, and N281. The chain crosses the membrane as a helical span at residues 309-329 (SLFSVFVFLSFYLGCLLVVFV). Residues 330–441 (HHMRFQRKPV…DRRIVSKKYK (112 aa)) are Cytoplasmic-facing. A disordered region spans residues 354–408 (VSHPITASTPEGSNYGAIDESSSSPGRQMSSSDGGQPCHSDTDSSVEESDFDTMP). Residues 374–385 (SSSSPGRQMSSS) are compositionally biased toward low complexity. Residues 397–408 (SSVEESDFDTMP) are compositionally biased toward acidic residues. Residues 442-462 (IYFWNIITIAVFYALPVMQLV) traverse the membrane as a helical segment. At 463–493 (ITYQTVVNVTGNQDICYYNFLCAHPLGVLSA) the chain is on the extracellular side. N470 carries an N-linked (GlcNAc...) asparagine glycan. Residues 494–514 (FNNILSNLGHVLLGFLFLLIV) form a helical membrane-spanning segment. Over 515–540 (LRRDLLHRRALEAKDIFAMEYGIPKH) the chain is Cytoplasmic. The chain crosses the membrane as a helical span at residues 541 to 561 (FGLFYAMGIALMMEGVLSACY). The Extracellular portion of the chain corresponds to 562 to 571 (HVCPNYSNFQ). An N-linked (GlcNAc...) asparagine glycan is attached at N566. The helical transmembrane segment at 572 to 589 (FDTSFMYMIAGLCMLKLY) threads the bilayer. Residues 590-599 (QTRHPDINAS) lie on the Cytoplasmic side of the membrane. The chain crosses the membrane as a helical span at residues 600-620 (AYSAYASFAVVITLTVLGVVF). At 621-625 (GKNDV) the chain is on the extracellular side. The chain crosses the membrane as a helical span at residues 626 to 646 (WFWIIFSAIHVLASLALSTQI). At 647 to 687 (YYMGRFKIDVSDTDLGIFRRAAMVFYTDCIQQCSRPLYMDR) the chain is on the cytoplasmic side. The helical transmembrane segment at 688–708 (MVLLIVGNLVNWSFALFGLIY) threads the bilayer. The Extracellular segment spans residues 709–714 (RPRDFA). Residues 715–735 (SYMLGIFICNLLLYLAFYIIM) form a helical membrane-spanning segment. At 736–745 (KLRSSEKVLP) the chain is on the cytoplasmic side. The chain crosses the membrane as a helical span at residues 746 to 766 (LPVFCIVATAVVWAAALYFFF). At 767–795 (QNLSSWEGTPAESREKNRECVLLGFFDDH) the chain is on the extracellular side. N768 carries an N-linked (GlcNAc...) asparagine glycan. A helical transmembrane segment spans residues 796 to 816 (DIWHFLSATALFFSFLVLLTL). Topologically, residues 817–831 (DDDLDVVRRDQIPVF) are cytoplasmic.

Belongs to the SID1 family.

The protein resides in the membrane. Its function is as follows. In vitro binds long double-stranded RNA (dsRNA) (500 and 700 base pairs), but not dsRNA shorter than 300 bp. Not involved in RNA autophagy, a process in which RNA is directly imported into lysosomes in an ATP-dependent manner, and degraded. The chain is SID1 transmembrane family member 1 (Sidt1) from Rattus norvegicus (Rat).